Consider the following 206-residue polypeptide: Large ribosomal subunit protein uL3 (206 aa).

The tract at residues 126–155 (HGHAGGPGAHGSRFHRHPGSMGANSTPSRV) is disordered.

Belongs to the universal ribosomal protein uL3 family. In terms of assembly, part of the 50S ribosomal subunit. Forms a cluster with proteins L14 and L19.

Its function is as follows. One of the primary rRNA binding proteins, it binds directly near the 3'-end of the 23S rRNA, where it nucleates assembly of the 50S subunit. This chain is Large ribosomal subunit protein uL3, found in Leptospira interrogans serogroup Icterohaemorrhagiae serovar copenhageni (strain Fiocruz L1-130).